The sequence spans 81 residues: Protein Vpu (81 aa).

The Extracellular segment spans residues 1 to 7 (MQSLEIL). Residues 8 to 28 (AIVALVVAAILAIVVWTIVGI) form a helical membrane-spanning segment. Residues 29–81 (EIRKTLRQKKIDRLIDRIRERAEDSGNESDGDEEELSALVEMGHHAPWDVDDL) are Cytoplasmic-facing. The segment at 50–81 (AEDSGNESDGDEEELSALVEMGHHAPWDVDDL) is disordered. 2 positions are modified to phosphoserine; by host CK2: Ser-53 and Ser-57. Residues 53 to 64 (SGNESDGDEEEL) are compositionally biased toward acidic residues. The segment covering 70–81 (MGHHAPWDVDDL) has biased composition (basic and acidic residues).

It belongs to the HIV-1 VPU protein family. In terms of assembly, homopentamer. Interacts with host CD4 and BRTC; these interactions induce proteasomal degradation of CD4. Interacts with host BST2; this interaction leads to the degradation of host BST2. Interacts with host FBXW11. Interacts with host AP1M1; this interaction plays a role in the mistrafficking and subsequent degradation of host BST2. Interacts with host RANBP2; this interaction allows Vpu to down-regulate host BLM sumoylation. In terms of processing, phosphorylated by host CK2. This phosphorylation is necessary for interaction with human BTRC and degradation of CD4.

The protein resides in the host membrane. With respect to regulation, ion channel activity is inhibited by hexamethylene amiloride in vitro. Enhances virion budding by targeting host CD4 and Tetherin/BST2 to proteasome degradation. Degradation of CD4 prevents any unwanted premature interactions between viral Env and its host receptor CD4 in the endoplasmic reticulum. Degradation of antiretroviral protein Tetherin/BST2 is important for virion budding, as BST2 tethers new viral particles to the host cell membrane. Mechanistically, Vpu bridges either CD4 or BST2 to BTRC, a substrate recognition subunit of the Skp1/Cullin/F-box protein E3 ubiquitin ligase, induces their ubiquitination and subsequent proteasomal degradation. The alteration of the E3 ligase specificity by Vpu seems to promote the degradation of host IKBKB, leading to NF-kappa-B down-regulation and subsequent apoptosis. Acts as a viroporin that forms an oligomeric ion channel in membranes. Modulates the host DNA repair mechanisms to promote degradation of nuclear viral cDNA in cells that are already productively infected in order to suppress immune sensing and proviral hyper-integration (superinfection). Manipulates PML-NBs and modulates SUMOylation of host BLM protein thereby enhancing its DNA-end processing activity toward viral unintegrated linear DNA. Also inhibits RAD52-mediated homologous repair of viral cDNA, preventing the generation of dead-end circular forms of single copies of the long terminal repeat and permitting sustained nucleolytic attack. The polypeptide is Protein Vpu (Homo sapiens (Human)).